The following is a 285-amino-acid chain: 2,3,4,5-tetrahydropyridine-2,6-dicarboxylate N-succinyltransferase (285 aa).

Substrate contacts are provided by Arg-111 and Asp-148.

This sequence belongs to the transferase hexapeptide repeat family. As to quaternary structure, homotrimer.

The protein resides in the cytoplasm. The catalysed reaction is (S)-2,3,4,5-tetrahydrodipicolinate + succinyl-CoA + H2O = (S)-2-succinylamino-6-oxoheptanedioate + CoA. The protein operates within amino-acid biosynthesis; L-lysine biosynthesis via DAP pathway; LL-2,6-diaminopimelate from (S)-tetrahydrodipicolinate (succinylase route): step 1/3. This Sinorhizobium medicae (strain WSM419) (Ensifer medicae) protein is 2,3,4,5-tetrahydropyridine-2,6-dicarboxylate N-succinyltransferase.